The following is a 161-amino-acid chain: SsrA-binding protein (161 aa).

Belongs to the SmpB family.

It is found in the cytoplasm. In terms of biological role, required for rescue of stalled ribosomes mediated by trans-translation. Binds to transfer-messenger RNA (tmRNA), required for stable association of tmRNA with ribosomes. tmRNA and SmpB together mimic tRNA shape, replacing the anticodon stem-loop with SmpB. tmRNA is encoded by the ssrA gene; the 2 termini fold to resemble tRNA(Ala) and it encodes a 'tag peptide', a short internal open reading frame. During trans-translation Ala-aminoacylated tmRNA acts like a tRNA, entering the A-site of stalled ribosomes, displacing the stalled mRNA. The ribosome then switches to translate the ORF on the tmRNA; the nascent peptide is terminated with the 'tag peptide' encoded by the tmRNA and targeted for degradation. The ribosome is freed to recommence translation, which seems to be the essential function of trans-translation. This chain is SsrA-binding protein, found in Vibrio campbellii (strain ATCC BAA-1116).